Consider the following 105-residue polypeptide: UPF0145 protein VP1283 (105 aa).

The protein belongs to the UPF0145 family.

The protein is UPF0145 protein VP1283 of Vibrio parahaemolyticus serotype O3:K6 (strain RIMD 2210633).